A 119-amino-acid chain; its full sequence is Protein Wnt-4 (119 aa).

Serine 1 carries the O-palmitoleoyl serine; by PORCN lipid modification. 2 disulfide bridges follow: cysteine 69–cysteine 100 and cysteine 85–cysteine 95. Asparagine 86 carries N-linked (GlcNAc...) asparagine glycosylation.

The protein belongs to the Wnt family. In terms of processing, palmitoleoylation is required for efficient binding to frizzled receptors. Depalmitoleoylation leads to Wnt signaling pathway inhibition.

The protein localises to the secreted. The protein resides in the extracellular space. It is found in the extracellular matrix. Functionally, ligand for members of the frizzled family of seven transmembrane receptors. Plays an important role in embryonic development. The polypeptide is Protein Wnt-4 (WNT-4) (Plethodon jordani (Red-cheeked salamander)).